The following is a 724-amino-acid chain: Probable methyltransferase PMT28 (724 aa).

Topologically, residues 1–22 (MMERKREMGIAYFARRIKQPRG) are cytoplasmic. A helical; Signal-anchor for type II membrane protein membrane pass occupies residues 23–43 (IWVKMTFIVVLGLCFVFFWSF). At 44–724 (LSSSASTFNV…LCAQKTLWRP (681 aa)) the chain is on the lumenal side. The segment at 63–211 (EPVSSRTKSA…ISKKRKRKGP (149 aa)) is disordered. A compositionally biased stretch (basic and acidic residues) spans 71 to 98 (SAHEVSESSKLHERGKVESGSKSKEGKK). Positions 107–125 (HETKKKKEHAVSHPHKKKD) are enriched in basic residues. A compositionally biased stretch (basic and acidic residues) spans 126 to 140 (VPKPVVEEVVVKEDQ). Acidic residues predominate over residues 141 to 173 (EHEEAESDDSDQSNKEDGEEGTESDGNEGESDG). N-linked (GlcNAc...) asparagine glycans are attached at residues asparagine 305, asparagine 316, and asparagine 568.

It belongs to the methyltransferase superfamily.

It localises to the golgi apparatus membrane. The chain is Probable methyltransferase PMT28 from Arabidopsis thaliana (Mouse-ear cress).